The chain runs to 401 residues: Ufm1-specific protease 2 (401 aa).

Catalysis depends on residues cysteine 234, aspartate 358, and histidine 360.

The protein belongs to the peptidase C78 family.

The protein localises to the endoplasmic reticulum. The protein resides in the cytoplasm. It is found in the nucleus. Functionally, thiol-dependent isopeptidase that specifically cleaves UFM1, a ubiquitin-like modifier protein, from conjugated proteins. While it is also able to mediate the processing of UFM1 precursors, a prerequisite for conjugation reactions, ufsp2 mainly acts as a protein deUFMylase that mediates deconjugation of UFM1 from target proteins. The chain is Ufm1-specific protease 2 from Danio rerio (Zebrafish).